A 138-amino-acid chain; its full sequence is Small ribosomal subunit protein uS11c (138 aa).

The interval methionine 1–glutamine 21 is disordered. A compositionally biased stretch (basic residues) spans glycine 9–glutamine 21.

It belongs to the universal ribosomal protein uS11 family. Part of the 30S ribosomal subunit.

It localises to the plastid. The protein localises to the chloroplast. The protein is Small ribosomal subunit protein uS11c of Cicer arietinum (Chickpea).